The primary structure comprises 209 residues: GTP cyclohydrolase-2 (209 aa).

49-53 (RIHSE) serves as a coordination point for GTP. Cysteine 54, cysteine 65, and cysteine 67 together coordinate Zn(2+). GTP is bound by residues glutamine 70, 92-94 (EGR), and threonine 114. Aspartate 126 acts as the Proton acceptor in catalysis. The active-site Nucleophile is the arginine 128. GTP contacts are provided by threonine 149 and lysine 154.

It belongs to the GTP cyclohydrolase II family. Zn(2+) is required as a cofactor.

The enzyme catalyses GTP + 4 H2O = 2,5-diamino-6-hydroxy-4-(5-phosphoribosylamino)-pyrimidine + formate + 2 phosphate + 3 H(+). Its pathway is cofactor biosynthesis; riboflavin biosynthesis; 5-amino-6-(D-ribitylamino)uracil from GTP: step 1/4. Catalyzes the conversion of GTP to 2,5-diamino-6-ribosylamino-4(3H)-pyrimidinone 5'-phosphate (DARP), formate and pyrophosphate. In Shewanella halifaxensis (strain HAW-EB4), this protein is GTP cyclohydrolase-2.